The primary structure comprises 431 residues: Beta-lactamase hydrolase-like protein (431 aa).

3 residues coordinate Zn(2+): His212, His214, and His286. Position 309 (Asp309) interacts with substrate.

The protein belongs to the metallo-beta-lactamase superfamily. Zn(2+) serves as cofactor.

Its function is as follows. Could play a role in cell adherence or biofilm development. The polypeptide is Beta-lactamase hydrolase-like protein (Agrobacterium fabrum (strain C58 / ATCC 33970) (Agrobacterium tumefaciens (strain C58))).